We begin with the raw amino-acid sequence, 459 residues long: Proton-coupled folate transporter (459 aa).

M1 is modified (N-acetylmethionine). The Cytoplasmic segment spans residues 1 to 25; sequence MEGRANSPGEPRAWPTRSVLCRGCV. The chain crosses the membrane as a helical span at residues 26 to 44; sequence EPLVFLANFALVLQGPVTT. Over 45–82 the chain is Extracellular; sequence QYLWHRFSADLGYNGTRHRDSCSNHSVDPIAQEVETLT. N-linked (GlcNAc...) asparagine glycosylation is found at N58 and N68. Cysteines 66 and 298 form a disulfide. Residues 83–108 form a helical membrane-spanning segment; the sequence is SHWTLYMNVGGFLVGLFSSTLLGAWS. At 109–112 the chain is on the cytoplasmic side; the sequence is DCVG. The chain crosses the membrane as a helical span at residues 113-135; that stretch reads RRPLLVLASLGLLLQTVLSIFVV. Residues 136–140 lie on the Extracellular side of the membrane; that stretch reads QLHLH. Residues 141-154 form a helical membrane-spanning segment; the sequence is IGYLVLGRILCALL. Over 155–177 the chain is Cytoplasmic; the sequence is GDFSGLLAASFASVADVSSSRTR. 2 residues coordinate H(+): D156 and E185. A helical transmembrane segment spans residues 178 to 203; sequence TIRMALLEACIGVAGMLASFIGGFLL. The Extracellular segment spans residues 204-208; it reads QEQVY. The chain crosses the membrane as a helical span at residues 209-227; it reads VNPFWLALAVLTVMTLYAA. The Cytoplasmic portion of the chain corresponds to 228–266; it reads FCFGETVKERTPTRLFTLRHHRSVIQLYVTQAPEKSRKH. A helical membrane pass occupies residues 267 to 289; the sequence is LALYSLAIFVMITVHLGAQDILT. H(+) is bound at residue H281. Residues 290 to 302 lie on the Extracellular side of the membrane; that stretch reads LYELSAPLCWDSR. Residues 303-325 form a helical membrane-spanning segment; that stretch reads LISYGSAAQQLPYLTSLLGLRLL. The Cytoplasmic portion of the chain corresponds to 326–331; the sequence is QYCLAD. A helical membrane pass occupies residues 332–351; sequence TWVAEIGLVFNILGMMVFAF. Topologically, residues 352–355 are extracellular; it reads ATIT. Residues 356–376 form a helical membrane-spanning segment; sequence PLMFTGYGLLFLSLVVTPIIR. The Cytoplasmic segment spans residues 377–388; it reads AKLSRLVRQSEQ. The helical transmembrane segment at 389–414 threads the bilayer; sequence GALFSALACVNGLAMLMASGIFNSLY. The Extracellular segment spans residues 415 to 422; sequence PATLNLMK. A helical membrane pass occupies residues 423-441; that stretch reads GFPFLLAAGLLFIPAILMG. The Cytoplasmic portion of the chain corresponds to 442–459; that stretch reads ILERDNHCPEFQEFSQSP. S458 is modified (phosphoserine).

The protein belongs to the major facilitator superfamily. SLC46A family. In terms of assembly, monomer. Expressed in retina and retinal pigment epithelium.

The protein localises to the cell membrane. It is found in the apical cell membrane. The protein resides in the basolateral cell membrane. Its subcellular location is the endosome membrane. It localises to the cytoplasm. It catalyses the reaction folate(in) + H(+)(in) = folate(out) + H(+)(out). It carries out the reaction (6S)-5-methyl-5,6,7,8-tetrahydrofolate(in) + H(+)(in) = (6S)-5-methyl-5,6,7,8-tetrahydrofolate(out) + H(+)(out). The enzyme catalyses methotrexate(in) + H(+)(in) = methotrexate(out) + H(+)(out). The catalysed reaction is pemetrexed(in) + H(+)(in) = pemetrexed(out) + H(+)(out). Its function is as follows. Proton-coupled folate symporter that mediates folate absorption using an H(+) gradient as a driving force. Involved in the intestinal absorption of folates at the brush-border membrane of the proximal jejunum, and the transport from blood to cerebrospinal fluid across the choroid plexus. Functions at acidic pH via alternate outward- and inward-open conformation states. Protonation of residues in the outward open state primes the protein for transport. Binding of folate promotes breaking of salt bridge network and subsequent closure of the extracellular gate, leading to the inward-open state and release of protons and folate. Also able to transport antifolate drugs, such as methotrexate and pemetrexed. Involved in FOLR1-mediated endocytosis by serving as a route of export of folates from acidified endosomes. Also acts as a lower-affinity, pH-independent heme carrier protein and constitutes the main importer of heme in the intestine. Imports heme in the retina and retinal pigment epithelium, in neurons of the hippocampus, in hepatocytes and in the renal epithelial cells. Hence, participates in the trafficking of heme and increases intracellular iron content. The polypeptide is Proton-coupled folate transporter (Bos taurus (Bovine)).